We begin with the raw amino-acid sequence, 66 residues long: Large ribosomal subunit protein bL35 (66 aa).

Residues 1-16 (MPKQKTHRASAKRFKR) are compositionally biased toward basic residues. The interval 1 to 20 (MPKQKTHRASAKRFKRTGSG) is disordered.

Belongs to the bacterial ribosomal protein bL35 family.

The protein is Large ribosomal subunit protein bL35 of Streptococcus uberis (strain ATCC BAA-854 / 0140J).